A 464-amino-acid polypeptide reads, in one-letter code: L-2-hydroxyglutarate dehydrogenase, mitochondrial (464 aa).

The N-terminal 52 residues, 1–52 (MWPTLRYVGGVCGLARYCVAGGFLRASGPASGVPGLLCGGGRRSSSTSSFDI), are a transit peptide targeting the mitochondrion. An N6-acetyllysine mark is found at Lys105 and Lys174.

The protein belongs to the L2HGDH family. It depends on FAD as a cofactor.

It localises to the mitochondrion. The catalysed reaction is (S)-2-hydroxyglutarate + A = 2-oxoglutarate + AH2. This is L-2-hydroxyglutarate dehydrogenase, mitochondrial (L2hgdh) from Mus musculus (Mouse).